Here is a 154-residue protein sequence, read N- to C-terminus: Aspartate carbamoyltransferase regulatory chain (154 aa).

Residues Cys-109, Cys-114, Cys-138, and Cys-141 each coordinate Zn(2+).

It belongs to the PyrI family. Contains catalytic and regulatory chains. Requires Zn(2+) as cofactor.

Its function is as follows. Involved in allosteric regulation of aspartate carbamoyltransferase. In Yersinia pseudotuberculosis serotype O:1b (strain IP 31758), this protein is Aspartate carbamoyltransferase regulatory chain.